We begin with the raw amino-acid sequence, 136 residues long: Putative nickel-responsive regulator (136 aa).

Positions 76, 87, 89, and 95 each coordinate Ni(2+).

The protein belongs to the transcriptional regulatory CopG/NikR family. The cofactor is Ni(2+).

In terms of biological role, transcriptional regulator. This chain is Putative nickel-responsive regulator, found in Desulfotalea psychrophila (strain LSv54 / DSM 12343).